The primary structure comprises 1940 residues: Myosin-3 (1940 aa).

The region spanning 33 to 82 (DAKTYCFVVDSKEEYAKGKIKSSQDGKVTVETEDNRTLVVKPEDVYAMNP) is the Myosin N-terminal SH3-like domain. In terms of domain architecture, Myosin motor spans 86–779 (DKIEDMAMLT…LLGTLEEMRD (694 aa)). Lys-130 is modified (N6,N6,N6-trimethyllysine). 179 to 186 (GESGAGKT) contacts ATP. 2 actin-binding regions span residues 656–678 (LNKL…IPNE) and 758–772 (KFGH…GLLG). An IQ domain is found at 782–811 (LAKLITRTQAVCRGFLMRVEFQKMMQRRES). A coiled-coil region spans residues 840–1933 (LLKSAETEKE…KTRDFTSSRM (1094 aa)). The segment at 1260–1289 (ARGKNEETQRSLSELTTQKSRLQTEAGELS) is disordered. Residues 1269-1282 (RSLSELTTQKSRLQ) show a composition bias toward polar residues.

This sequence belongs to the TRAFAC class myosin-kinesin ATPase superfamily. Myosin family. As to quaternary structure, muscle myosin is a hexameric protein that consists of 2 heavy chain subunits (MHC), 2 alkali light chain subunits (MLC) and 2 regulatory light chain subunits (MLC-2).

Its subcellular location is the cytoplasm. It is found in the myofibril. Its function is as follows. Muscle contraction. In Rattus norvegicus (Rat), this protein is Myosin-3 (Myh3).